Reading from the N-terminus, the 276-residue chain is Large ribosomal subunit protein uL2 (276 aa).

The interval 223-276 (GVAMNPVDHPHGGGEGRGKGHHPTSPWGLPTKGYKTRRGKRPSDKFIVRRRNEV) is disordered. Basic and acidic residues-rich tracts occupy residues 230–240 (DHPHGGGEGRG) and 263–276 (RPSD…RNEV).

Belongs to the universal ribosomal protein uL2 family. Part of the 50S ribosomal subunit. Forms a bridge to the 30S subunit in the 70S ribosome.

One of the primary rRNA binding proteins. Required for association of the 30S and 50S subunits to form the 70S ribosome, for tRNA binding and peptide bond formation. It has been suggested to have peptidyltransferase activity; this is somewhat controversial. Makes several contacts with the 16S rRNA in the 70S ribosome. The sequence is that of Large ribosomal subunit protein uL2 from Thermotoga neapolitana (strain ATCC 49049 / DSM 4359 / NBRC 107923 / NS-E).